A 217-amino-acid chain; its full sequence is Large ribosomal subunit protein uL1 (217 aa).

The protein belongs to the universal ribosomal protein uL1 family.

This is Large ribosomal subunit protein uL1 (RpL10A) from Spodoptera frugiperda (Fall armyworm).